A 95-amino-acid chain; its full sequence is Co-chaperonin GroES (95 aa).

This sequence belongs to the GroES chaperonin family. As to quaternary structure, heptamer of 7 subunits arranged in a ring. Interacts with the chaperonin GroEL.

It is found in the cytoplasm. Functionally, together with the chaperonin GroEL, plays an essential role in assisting protein folding. The GroEL-GroES system forms a nano-cage that allows encapsulation of the non-native substrate proteins and provides a physical environment optimized to promote and accelerate protein folding. GroES binds to the apical surface of the GroEL ring, thereby capping the opening of the GroEL channel. The chain is Co-chaperonin GroES from Bordetella petrii (strain ATCC BAA-461 / DSM 12804 / CCUG 43448).